Reading from the N-terminus, the 577-residue chain is Arginine--tRNA ligase (577 aa).

Positions 122-132 match the 'HIGH' region motif; that stretch reads PNVAKEMHVGH.

This sequence belongs to the class-I aminoacyl-tRNA synthetase family. As to quaternary structure, monomer.

The protein localises to the cytoplasm. The enzyme catalyses tRNA(Arg) + L-arginine + ATP = L-arginyl-tRNA(Arg) + AMP + diphosphate. The sequence is that of Arginine--tRNA ligase from Salmonella newport (strain SL254).